Reading from the N-terminus, the 388-residue chain is Alanine racemase (388 aa).

Lysine 40 acts as the Proton acceptor; specific for D-alanine in catalysis. N6-(pyridoxal phosphate)lysine is present on lysine 40. Residue arginine 137 coordinates substrate. The active-site Proton acceptor; specific for L-alanine is tyrosine 269. Methionine 318 serves as a coordination point for substrate.

The protein belongs to the alanine racemase family. Pyridoxal 5'-phosphate is required as a cofactor.

The catalysed reaction is L-alanine = D-alanine. Its pathway is amino-acid biosynthesis; D-alanine biosynthesis; D-alanine from L-alanine: step 1/1. Functionally, catalyzes the interconversion of L-alanine and D-alanine. May also act on other amino acids. This chain is Alanine racemase (alr), found in Halalkalibacterium halodurans (strain ATCC BAA-125 / DSM 18197 / FERM 7344 / JCM 9153 / C-125) (Bacillus halodurans).